A 362-amino-acid polypeptide reads, in one-letter code: Histidinol-phosphate aminotransferase (362 aa).

N6-(pyridoxal phosphate)lysine is present on Lys-218.

The protein belongs to the class-II pyridoxal-phosphate-dependent aminotransferase family. Histidinol-phosphate aminotransferase subfamily. In terms of assembly, homodimer. Pyridoxal 5'-phosphate serves as cofactor.

It catalyses the reaction L-histidinol phosphate + 2-oxoglutarate = 3-(imidazol-4-yl)-2-oxopropyl phosphate + L-glutamate. The protein operates within amino-acid biosynthesis; L-histidine biosynthesis; L-histidine from 5-phospho-alpha-D-ribose 1-diphosphate: step 7/9. The protein is Histidinol-phosphate aminotransferase of Xanthomonas campestris pv. campestris (strain 8004).